We begin with the raw amino-acid sequence, 194 residues long: Small ribosomal subunit protein uS4c (194 aa).

Positions 82–143 (MRLDNILFRL…KQRSKALIQD (62 aa)) constitute an S4 RNA-binding domain.

It belongs to the universal ribosomal protein uS4 family. Part of the 30S ribosomal subunit. Contacts protein S5. The interaction surface between S4 and S5 is involved in control of translational fidelity.

It localises to the plastid. Its subcellular location is the chloroplast. Its function is as follows. One of the primary rRNA binding proteins, it binds directly to 16S rRNA where it nucleates assembly of the body of the 30S subunit. With S5 and S12 plays an important role in translational accuracy. The sequence is that of Small ribosomal subunit protein uS4c (rps4) from Bobartia gladiata (Sword rush-lily).